Reading from the N-terminus, the 534-residue chain is Chaperonin GroEL 3 (534 aa).

ATP contacts are provided by residues 31–34 (TLGP), Gly-416, 479–481 (NAL), and Asp-495.

It belongs to the chaperonin (HSP60) family. Forms a cylinder of 14 subunits composed of two heptameric rings stacked back-to-back. Interacts with the co-chaperonin GroES.

The protein resides in the cytoplasm. The enzyme catalyses ATP + H2O + a folded polypeptide = ADP + phosphate + an unfolded polypeptide.. Together with its co-chaperonin GroES, plays an essential role in assisting protein folding. The GroEL-GroES system forms a nano-cage that allows encapsulation of the non-native substrate proteins and provides a physical environment optimized to promote and accelerate protein folding. This Protochlamydia amoebophila (strain UWE25) protein is Chaperonin GroEL 3.